A 78-amino-acid chain; its full sequence is Small ribosomal subunit protein uS17 (78 aa).

The protein belongs to the universal ribosomal protein uS17 family. As to quaternary structure, part of the 30S ribosomal subunit.

In terms of biological role, one of the primary rRNA binding proteins, it binds specifically to the 5'-end of 16S ribosomal RNA. This is Small ribosomal subunit protein uS17 from Wolbachia pipientis wMel.